Reading from the N-terminus, the 531-residue chain is Cytochrome P450 monooxygenase peniB (531 aa).

Residues 30–48 (ILSIAAVVFLGYLLLRPLF) form a helical membrane-spanning segment. Residue C445 participates in heme binding.

The protein belongs to the cytochrome P450 family. Heme is required as a cofactor.

The protein resides in the membrane. It catalyses the reaction silphinene-15-oate + 2 reduced [NADPH--hemoprotein reductase] + 2 O2 = gamma-lactone-2-keto[5.5.5.5]fenestrane + 2 oxidized [NADPH--hemoprotein reductase] + 3 H2O + H(+). Its pathway is secondary metabolite biosynthesis; terpenoid biosynthesis. Cytochrome P450 monooxygenase; part of the gene cluster that mediates the biosynthesis of penifulvin A, a potent insecticidal sesquiterpene that features a [5.5.5.6]dioxafenestrane ring. Within the pathway, peniB catalyzes the multi-step oxidation of silphinene to synthesize gamma-lactone-2-keto[5.5.5.5]fenestrane, including oxidation of the C15 methylgroup in silphinene to form silphinene-15-oic acid, activationof the C1-C2 double bond to form the gamma-lactone-2-hydroxy[5.5.5.5]fenestrane, and dehydrogenation of the hydroxy group at C2 of gamma-lactone-2-hydroxy[5.5.5.5]fenestrane to generate gamma-lactone-2-keto[5.5.5.5]fenestrane. The first step of the pathway is performed by the sesquiterpene cyclase peniA that generates the angular triquinane scaffold silphinene via cyclization of the linear farnesyl pyrophosphate (FPP). The cytochrome P450 monooxygenase peniB and the flavin-dependent monooxygenase peniC then catalyze a series of oxidation reactions to transform silphinene into penifulvin A. In Penicillium patulum (Penicillium griseofulvum), this protein is Cytochrome P450 monooxygenase peniB.